Here is a 123-residue protein sequence, read N- to C-terminus: MAKKRKKKLSSPEGISHIHASANNTIVTLTNTGGDAITWSSSGSIGYKGSKKSTPYAAGIAAETAAKVAIDLGLKKVIVKVNGTGSGKDTAIRSLHAAGLEISEIHDVTPIPHNGCRPPKKPR.

The interval 1–22 (MAKKRKKKLSSPEGISHIHASA) is disordered.

The protein belongs to the universal ribosomal protein uS11 family. As to quaternary structure, part of the 30S ribosomal subunit. Interacts with proteins S7 and S18. Binds to IF-3.

In terms of biological role, located on the platform of the 30S subunit, it bridges several disparate RNA helices of the 16S rRNA. Forms part of the Shine-Dalgarno cleft in the 70S ribosome. The sequence is that of Small ribosomal subunit protein uS11 from Malacoplasma penetrans (strain HF-2) (Mycoplasma penetrans).